Reading from the N-terminus, the 180-residue chain is Nucleoside-triphosphatase THEP1 (180 aa).

Residues 18-25 and 104-111 contribute to the ATP site; these read GRPGVGKT and LVIMDEIG.

Belongs to the THEP1 NTPase family.

The enzyme catalyses a ribonucleoside 5'-triphosphate + H2O = a ribonucleoside 5'-diphosphate + phosphate + H(+). Its function is as follows. Has nucleotide phosphatase activity towards ATP, GTP, CTP, TTP and UTP. May hydrolyze nucleoside diphosphates with lower efficiency. This chain is Nucleoside-triphosphatase THEP1, found in Metallosphaera sedula (strain ATCC 51363 / DSM 5348 / JCM 9185 / NBRC 15509 / TH2).